We begin with the raw amino-acid sequence, 137 residues long: Small ribosomal subunit protein uS9 (137 aa).

Residues 103–137 (PPLKAEGYLTRDPRAKERKKYGLHKARKAPQYSKR) are disordered. Residues 118-137 (KERKKYGLHKARKAPQYSKR) show a composition bias toward basic residues.

The protein belongs to the universal ribosomal protein uS9 family.

The chain is Small ribosomal subunit protein uS9 from Crocosphaera subtropica (strain ATCC 51142 / BH68) (Cyanothece sp. (strain ATCC 51142)).